A 192-amino-acid polypeptide reads, in one-letter code: Iron sulfur cluster assembly protein 1, mitochondrial (192 aa).

Residues Met-1 to Met-53 constitute a mitochondrion transit peptide.

This sequence belongs to the NifU family. Homodimer. Component of the core Fe-S cluster (ISC) assembly machinery. Requires [2Fe-2S] cluster as cofactor.

Its subcellular location is the mitochondrion. The protein resides in the mitochondrion matrix. Its pathway is cofactor biosynthesis; iron-sulfur cluster biosynthesis. Functionally, scaffold protein for the de novo synthesis of iron-sulfur (Fe-S) clusters within mitochondria, which is required for maturation of both mitochondrial and cytoplasmic [2Fe-2S] and [4Fe-4S] proteins. First, a [2Fe-2S] cluster is transiently assembled on the scaffold protein isu1. In a second step, the cluster is released from isu1, transferred to a glutaredoxin, followed by the formation of mitochondrial [2Fe-2S] proteins, the synthesis of [4Fe-4S] clusters and their target-specific insertion into the recipient apoproteins. Cluster assembly on isu1 depends on the function of the cysteine desulfurase complex nfs1-isd11, which serves as the sulfur donor for cluster synthesis, the iron-binding protein frataxin as the putative iron donor, and the electron transfer chain comprised of ferredoxin reductase and ferredoxin, which receive their electrons from NADH. This is Iron sulfur cluster assembly protein 1, mitochondrial (isu1) from Schizosaccharomyces pombe (strain 972 / ATCC 24843) (Fission yeast).